The following is a 345-amino-acid chain: NADH-ubiquinone oxidoreductase chain 2 (345 aa).

9 consecutive transmembrane segments (helical) span residues 1 to 21 (MNPI…VLTM), 60 to 80 (FLIQ…NAHL), 110 to 130 (PIHF…ALII), 149 to 169 (IPTP…GLGG), 179 to 196 (MAFS…IITI), 200 to 222 (LTLF…MHLT), 240 to 260 (TANL…LSGF), 274 to 294 (NLVP…MFYL), and 323 to 343 (TTML…TPTM).

Belongs to the complex I subunit 2 family.

Its subcellular location is the mitochondrion inner membrane. It carries out the reaction a ubiquinone + NADH + 5 H(+)(in) = a ubiquinol + NAD(+) + 4 H(+)(out). Functionally, core subunit of the mitochondrial membrane respiratory chain NADH dehydrogenase (Complex I) that is believed to belong to the minimal assembly required for catalysis. Complex I functions in the transfer of electrons from NADH to the respiratory chain. The immediate electron acceptor for the enzyme is believed to be ubiquinone. The chain is NADH-ubiquinone oxidoreductase chain 2 (MT-ND2) from Varanus melinus (Quince monitor lizard).